The chain runs to 150 residues: 6,7-dimethyl-8-ribityllumazine synthase (150 aa).

5-amino-6-(D-ribitylamino)uracil-binding positions include F11, 43-45 (VYD), and 67-69 (AVI). Residue 72 to 73 (AT) participates in (2S)-2-hydroxy-3-oxobutyl phosphate binding. H75 functions as the Proton donor in the catalytic mechanism. L100 provides a ligand contact to 5-amino-6-(D-ribitylamino)uracil. Residue R115 participates in (2S)-2-hydroxy-3-oxobutyl phosphate binding.

This sequence belongs to the DMRL synthase family.

The catalysed reaction is (2S)-2-hydroxy-3-oxobutyl phosphate + 5-amino-6-(D-ribitylamino)uracil = 6,7-dimethyl-8-(1-D-ribityl)lumazine + phosphate + 2 H2O + H(+). Its pathway is cofactor biosynthesis; riboflavin biosynthesis; riboflavin from 2-hydroxy-3-oxobutyl phosphate and 5-amino-6-(D-ribitylamino)uracil: step 1/2. Functionally, catalyzes the formation of 6,7-dimethyl-8-ribityllumazine by condensation of 5-amino-6-(D-ribitylamino)uracil with 3,4-dihydroxy-2-butanone 4-phosphate. This is the penultimate step in the biosynthesis of riboflavin. In Pyrobaculum neutrophilum (strain DSM 2338 / JCM 9278 / NBRC 100436 / V24Sta) (Thermoproteus neutrophilus), this protein is 6,7-dimethyl-8-ribityllumazine synthase.